The primary structure comprises 619 residues: Zinc finger and BTB domain-containing protein 7C (619 aa).

The 68-residue stretch at 34-101 (CDVLLVVQEQ…AYTSTLTITA (68 aa)) folds into the BTB domain. Residues 129–218 (PGGDGGEEDD…DSFQAGSPGH (90 aa)) form a disordered region. Positions 133-173 (GGEEDDKEDDDDDEDDDDEEDEEEEEEEEEDDDDDTEDFAD) are enriched in acidic residues. Positions 191–208 (KTDHLTEKAYSDTPRDFP) are enriched in basic and acidic residues. C2H2-type zinc fingers lie at residues 364 to 386 (QQCP…MRTH), 392 to 414 (YMCT…MRKH), and 420 to 442 (YLCI…MRIH). Residues 448–478 (YQCEFCYKSFTRSDHLHRHIKRQSCRMARPR) form a C2H2-type 4; degenerate zinc finger.

As to expression, detected in normal cervical keratinocytes, and in some cervical carcinoma cell lines.

Its function is as follows. May be a tumor suppressor gene. The chain is Zinc finger and BTB domain-containing protein 7C (ZBTB7C) from Homo sapiens (Human).